Reading from the N-terminus, the 590-residue chain is Neuronal PAS domain-containing protein 1 (590 aa).

Residues 45–98 (QRKEKSRNAARSRRGKENLEFFELAKLLPLPGAISSQLDKASIVRLSVTYLRLR) enclose the bHLH domain. The PAS 1 domain maps to 135-207 (EQHLGGHILQ…LGLRTPTPGP (73 aa)). Residues 198 to 229 (LGLRTPTPGPPTPPSVSSSSSSSSSLADTPEI) are disordered. Positions 212–222 (SVSSSSSSSSS) are enriched in low complexity. The region spanning 293 to 359 (APLAELPLHG…IRQSHVDLLD (67 aa)) is the PAS 2 domain. A PAC domain is found at 365–408 (TGYYRWLQRAGGFVWLQSVATVAGSGKSPGEHHVLWVSHVLSQA). A disordered region spans residues 425-494 (ACEEASSPGP…SHPATPRPEF (70 aa)). Residues 433-442 (GPEPTEPEPP) show a composition bias toward pro residues. A compositionally biased stretch (basic and acidic residues) spans 463–476 (IKVEPGPRETKGSE).

In terms of assembly, efficient DNA binding requires dimerization with another bHLH protein. Interacts with ARNT; forms a heterodimer that binds core DNA sequence 5'-[AG]CGTG-3' within the hypoxia response element (HRE) leading to a transcriptional repressor on its target gene TH.

Its subcellular location is the nucleus. Functionally, may control regulatory pathways relevant to schizophrenia and to psychotic illness. May play a role in late central nervous system development by modulating EPO expression in response to cellular oxygen level. Forms a heterodimer that binds core DNA sequence 5'-TACGTG-3' within the hypoxia response element (HRE) leading to transcriptional repression on its target gene TH. This is Neuronal PAS domain-containing protein 1 (NPAS1) from Homo sapiens (Human).